The chain runs to 366 residues: Homer protein homolog 1 (366 aa).

One can recognise a WH1 domain in the interval 1–110; it reads MGEQPIFSTR…EKFQEFKEAA (110 aa). G2 is subject to N-acetylglycine. The interval 114 to 189 is disordered; the sequence is KEKSQEKMEL…RTQGLSHASS (76 aa). Over residues 138–147 the composition is skewed to polar residues; sequence SPLTPESING. A coiled-coil region spans residues 193–364; the sequence is KHWEAELATL…LRDNLAKLLE (172 aa). Residues 302–366 form a required for tetramerization region; it reads KLQEVEIRNK…DNLAKLLECS (65 aa). Residue S318 is modified to Phosphoserine.

This sequence belongs to the Homer family. As to quaternary structure, tetramer; this tetrameric structure is critical for forming the high-order complex with SHANK1, which in turn is necessary for the structural and functional integrity of dendritic spines. Interacts with GRM1, GRM5, ITPR1, DYN3, RYR1, RYR2 and SHANK3. Interacts with IFT57 and OPHN1. Isoform 1 and isoform 2 encode coiled-coil structures that mediate homo- and heteromultimerization. Interacts with SHANK1; forms high-order polymerized complex with a mesh-like network structure, at least composed of SHANK1, HOMER1 and DLGAP1; the complex formation is SHANK1 multimerization dependent. Interacts with NFATC4. Interacts with DAGLA (via PPXXF motif); this interaction is required for the cell membrane localization of DAGLA. Interacts with SRGAP2. As to expression, highly expressed in cortex, Purkinje cells of the cerebellum, hippocampus, striatum and olfactory bulb. Isoform 1 and isoform 3 are expressed in skeletal and cardiac muscle.

The protein localises to the cytoplasm. It localises to the postsynaptic density. It is found in the synapse. Its subcellular location is the cell projection. The protein resides in the dendritic spine. Functionally, postsynaptic density scaffolding protein. Binds and cross-links cytoplasmic regions of GRM1, GRM5, ITPR1, DNM3, RYR1, RYR2, SHANK1 and SHANK3. By physically linking GRM1 and GRM5 with ER-associated ITPR1 receptors, it aids the coupling of surface receptors to intracellular calcium release. May also couple GRM1 to PI3 kinase through its interaction with AGAP2. Differentially regulates the functions of the calcium activated channel ryanodine receptors RYR1 and RYR2. Isoform 1 decreases the activity of RYR2, and increases the activity of RYR1, whereas isoform 3 counteracts the effects by competing for binding sites. Isoform 1 regulates the trafficking and surface expression of GRM5. Isoform 3 acts as a natural dominant negative, in dynamic competition with constitutively expressed isoform 1, and isoform 2 to regulate synaptic metabotropic glutamate function. Isoform 3, may be involved in the structural changes that occur at synapses during long-lasting neuronal plasticity and development. Forms a high-order complex with SHANK1, which in turn is necessary for the structural and functional integrity of dendritic spines. Negatively regulates T cell activation by inhibiting the calcineurin-NFAT pathway. Acts by competing with calcineurin/PPP3CA for NFAT protein binding, hence preventing NFAT activation by PPP3CA. The sequence is that of Homer protein homolog 1 from Rattus norvegicus (Rat).